We begin with the raw amino-acid sequence, 362 residues long: Acyl-CoA-binding domain-containing protein 3 (362 aa).

Positions 1–22 are cleaved as a signal peptide; it reads MEVFLEMLLTAVVALLFSFLLA. Disordered regions lie at residues 132–151 and 193–214; these read QDEQ…SPEN and VEKS…EKTE. The stretch at 192 to 221 forms a coiled coil; sequence RVEKSSNMVEESDAEAENEEKTELTIEEDD. Residues 231–318 enclose the ACB domain; that stretch reads LEKAFAAAVN…VSKEIPGLTK (88 aa). Residues 260-264, Lys286, and Tyr305 contribute to the an acyl-CoA site; that span reads FGLHK. Positions 329-362 are disordered; sequence METSVGLPPNSGSLEDPTNLVTTGVDESSKNGIP.

This sequence belongs to the ACBP family. Expressed in roots, stems, leaves, flowers and siliques.

It is found in the secreted. The protein resides in the extracellular space. Binds medium- and long-chain acyl-CoA esters with very high affinity. Can interact in vitro with arachidonyl-CoA, barely with oleoyl-CoA, but not with palmitoyl-CoA. The polypeptide is Acyl-CoA-binding domain-containing protein 3 (ACBP3) (Arabidopsis thaliana (Mouse-ear cress)).